Here is a 202-residue protein sequence, read N- to C-terminus: Holliday junction branch migration complex subunit RuvA (202 aa).

The interval methionine 1–leucine 64 is domain I. The tract at residues threonine 65–serine 143 is domain II. Residues glutamate 144–threonine 152 are flexible linker. A domain III region spans residues threonine 152–proline 202.

The protein belongs to the RuvA family. Homotetramer. Forms an RuvA(8)-RuvB(12)-Holliday junction (HJ) complex. HJ DNA is sandwiched between 2 RuvA tetramers; dsDNA enters through RuvA and exits via RuvB. An RuvB hexamer assembles on each DNA strand where it exits the tetramer. Each RuvB hexamer is contacted by two RuvA subunits (via domain III) on 2 adjacent RuvB subunits; this complex drives branch migration. In the full resolvosome a probable DNA-RuvA(4)-RuvB(12)-RuvC(2) complex forms which resolves the HJ.

Its subcellular location is the cytoplasm. In terms of biological role, the RuvA-RuvB-RuvC complex processes Holliday junction (HJ) DNA during genetic recombination and DNA repair, while the RuvA-RuvB complex plays an important role in the rescue of blocked DNA replication forks via replication fork reversal (RFR). RuvA specifically binds to HJ cruciform DNA, conferring on it an open structure. The RuvB hexamer acts as an ATP-dependent pump, pulling dsDNA into and through the RuvAB complex. HJ branch migration allows RuvC to scan DNA until it finds its consensus sequence, where it cleaves and resolves the cruciform DNA. This chain is Holliday junction branch migration complex subunit RuvA, found in Acetivibrio thermocellus (strain ATCC 27405 / DSM 1237 / JCM 9322 / NBRC 103400 / NCIMB 10682 / NRRL B-4536 / VPI 7372) (Clostridium thermocellum).